We begin with the raw amino-acid sequence, 89 residues long: Small ribosomal subunit protein uS15 (89 aa).

The protein belongs to the universal ribosomal protein uS15 family. In terms of assembly, part of the 30S ribosomal subunit. Forms a bridge to the 50S subunit in the 70S ribosome, contacting the 23S rRNA.

Its function is as follows. One of the primary rRNA binding proteins, it binds directly to 16S rRNA where it helps nucleate assembly of the platform of the 30S subunit by binding and bridging several RNA helices of the 16S rRNA. Functionally, forms an intersubunit bridge (bridge B4) with the 23S rRNA of the 50S subunit in the ribosome. This is Small ribosomal subunit protein uS15 from Oceanobacillus iheyensis (strain DSM 14371 / CIP 107618 / JCM 11309 / KCTC 3954 / HTE831).